Consider the following 239-residue polypeptide: Phosphoribosylaminoimidazole-succinocarboxamide synthase (239 aa).

Belongs to the SAICAR synthetase family.

It catalyses the reaction 5-amino-1-(5-phospho-D-ribosyl)imidazole-4-carboxylate + L-aspartate + ATP = (2S)-2-[5-amino-1-(5-phospho-beta-D-ribosyl)imidazole-4-carboxamido]succinate + ADP + phosphate + 2 H(+). It functions in the pathway purine metabolism; IMP biosynthesis via de novo pathway; 5-amino-1-(5-phospho-D-ribosyl)imidazole-4-carboxamide from 5-amino-1-(5-phospho-D-ribosyl)imidazole-4-carboxylate: step 1/2. The protein is Phosphoribosylaminoimidazole-succinocarboxamide synthase of Acinetobacter baylyi (strain ATCC 33305 / BD413 / ADP1).